We begin with the raw amino-acid sequence, 391 residues long: Protein Wnt-2b (391 aa).

5 disulfides stabilise this stretch: C107–C118, C158–C166, C168–C188, C237–C251, and C239–C246. N117 carries an N-linked (GlcNAc...) asparagine glycan. A lipid anchor (O-palmitoleoyl serine; by PORCN) is attached at S243. N-linked (GlcNAc...) asparagine glycosylation occurs at N283. Intrachain disulfides connect C309–C340, C325–C335, C339–C379, C355–C370, C357–C367, and C362–C363.

Belongs to the Wnt family. As to quaternary structure, forms a soluble 1:1 complex with AFM; this prevents oligomerization and is required for prolonged biological activity. The complex with AFM may represent the physiological form in body fluids. Interacts with FZD4 and FZD5. Post-translationally, palmitoleoylation is required for efficient binding to frizzled receptors. Depalmitoleoylation leads to Wnt signaling pathway inhibition. Isoform 1 is expressed in adult heart, brain, placenta, lung, prostate, testis, ovary, small intestine and colon. In the adult brain, it is mainly found in the caudate nucleus, subthalamic nucleus and thalamus. Also detected in fetal brain, lung and kidney. Isoform 2 is expressed in fetal brain, fetal lung, fetal kidney, caudate nucleus, testis and cancer cell lines.

It is found in the secreted. The protein localises to the extracellular space. The protein resides in the extracellular matrix. Functionally, ligand for members of the frizzled family of seven transmembrane receptors. Functions in the canonical Wnt/beta-catenin signaling pathway. Plays a redundant role in embryonic lung development. The protein is Protein Wnt-2b (WNT2B) of Homo sapiens (Human).